A 295-amino-acid chain; its full sequence is Probable ketoamine kinase slr1563 (295 aa).

An ATP-binding site is contributed by 99-101 (EWL). The active-site Proton acceptor is the Asp201.

It belongs to the fructosamine kinase family.

In terms of biological role, ketoamine kinase that phosphorylates ketoamines on the third carbon of the sugar moiety to generate ketoamine 3-phosphate. The protein is Probable ketoamine kinase slr1563 of Synechocystis sp. (strain ATCC 27184 / PCC 6803 / Kazusa).